Consider the following 257-residue polypeptide: Glutamate racemase (257 aa).

Substrate contacts are provided by residues 12 to 13 and 44 to 45; these read DS and YG. The active-site Proton donor/acceptor is Cys-75. A substrate-binding site is contributed by 76-77; the sequence is NT. The active-site Proton donor/acceptor is the Cys-176. Substrate is bound at residue 177–178; sequence TH.

Belongs to the aspartate/glutamate racemases family.

The enzyme catalyses L-glutamate = D-glutamate. The protein operates within cell wall biogenesis; peptidoglycan biosynthesis. Its function is as follows. Provides the (R)-glutamate required for cell wall biosynthesis. This is Glutamate racemase from Thermus thermophilus (strain ATCC BAA-163 / DSM 7039 / HB27).